A 382-amino-acid chain; its full sequence is Na(+)/H(+) antiporter NhaA (382 aa).

11 consecutive transmembrane segments (helical) span residues Ala-14–Leu-34, Met-49–Leu-69, Ile-87–Phe-107, Gly-117–Gly-137, Val-146–Phe-166, Leu-171–Ala-191, Phe-205–Leu-225, Val-252–Val-272, Val-285–Val-305, Ile-321–Leu-341, and Leu-356–Ser-376.

This sequence belongs to the NhaA Na(+)/H(+) (TC 2.A.33) antiporter family.

The protein localises to the cell inner membrane. The enzyme catalyses Na(+)(in) + 2 H(+)(out) = Na(+)(out) + 2 H(+)(in). Functionally, na(+)/H(+) antiporter that extrudes sodium in exchange for external protons. The chain is Na(+)/H(+) antiporter NhaA from Aliivibrio fischeri (strain ATCC 700601 / ES114) (Vibrio fischeri).